The following is a 130-amino-acid chain: Small ribosomal subunit protein uS9 (130 aa).

This sequence belongs to the universal ribosomal protein uS9 family.

The polypeptide is Small ribosomal subunit protein uS9 (Hydrogenovibrio crunogenus (strain DSM 25203 / XCL-2) (Thiomicrospira crunogena)).